The sequence spans 333 residues: Ketol-acid reductoisomerase (NADP(+)) (333 aa).

A KARI N-terminal Rossmann domain is found at M1 to T179. NADP(+) contacts are provided by residues Y22 to Q25, K45, S48, S50, and D80 to Q83. H105 is an active-site residue. G131 contacts NADP(+). Residues T180–V325 enclose the KARI C-terminal knotted domain. Positions 188, 192, 224, and 228 each coordinate Mg(2+). Position 249 (S249) interacts with substrate.

Belongs to the ketol-acid reductoisomerase family. Requires Mg(2+) as cofactor.

The enzyme catalyses (2R)-2,3-dihydroxy-3-methylbutanoate + NADP(+) = (2S)-2-acetolactate + NADPH + H(+). It catalyses the reaction (2R,3R)-2,3-dihydroxy-3-methylpentanoate + NADP(+) = (S)-2-ethyl-2-hydroxy-3-oxobutanoate + NADPH + H(+). It participates in amino-acid biosynthesis; L-isoleucine biosynthesis; L-isoleucine from 2-oxobutanoate: step 2/4. It functions in the pathway amino-acid biosynthesis; L-valine biosynthesis; L-valine from pyruvate: step 2/4. Functionally, involved in the biosynthesis of branched-chain amino acids (BCAA). Catalyzes an alkyl-migration followed by a ketol-acid reduction of (S)-2-acetolactate (S2AL) to yield (R)-2,3-dihydroxy-isovalerate. In the isomerase reaction, S2AL is rearranged via a Mg-dependent methyl migration to produce 3-hydroxy-3-methyl-2-ketobutyrate (HMKB). In the reductase reaction, this 2-ketoacid undergoes a metal-dependent reduction by NADPH to yield (R)-2,3-dihydroxy-isovalerate. The sequence is that of Ketol-acid reductoisomerase (NADP(+)) from Mycobacterium ulcerans (strain Agy99).